The following is a 247-amino-acid chain: Carboxy-S-adenosyl-L-methionine synthase (247 aa).

S-adenosyl-L-methionine contacts are provided by residues tyrosine 40, 65-67 (GSS), 90-91 (DN), 122-123 (DI), asparagine 137, and arginine 204.

Belongs to the class I-like SAM-binding methyltransferase superfamily. Cx-SAM synthase family. As to quaternary structure, homodimer.

It catalyses the reaction prephenate + S-adenosyl-L-methionine = carboxy-S-adenosyl-L-methionine + 3-phenylpyruvate + H2O. Functionally, catalyzes the conversion of S-adenosyl-L-methionine (SAM) to carboxy-S-adenosyl-L-methionine (Cx-SAM). The protein is Carboxy-S-adenosyl-L-methionine synthase of Pseudomonas fluorescens (strain SBW25).